Reading from the N-terminus, the 367-residue chain is Alginate lyase (367 aa).

The first 24 residues, 1–24, serve as a signal peptide directing secretion; sequence MTAFKRIFSPALLVLALYGGAAHA. Substrate-binding positions include 63-64, 136-137, and tyrosine 254; these read SK and HT.

Belongs to the polysaccharide lyase 5 family.

It is found in the periplasm. It catalyses the reaction Eliminative cleavage of alginate to give oligosaccharides with 4-deoxy-alpha-L-erythro-hex-4-enuronosyl groups at their non-reducing ends and beta-D-mannuronate at their reducing end.. Its function is as follows. Catalyzes the depolymerization of alginate by cleaving the beta-1,4 glycosidic bond between two adjacent sugar residues via a beta-elimination mechanism. May serve to degrade mislocalized alginate that is trapped in the periplasmic space. The polypeptide is Alginate lyase (Pseudomonas putida (strain W619)).